The following is a 605-amino-acid chain: Tungsten-containing aldehyde ferredoxin oxidoreductase (605 aa).

Arg76, Asn93, Gly95, Arg182, Ala183, Gly185, and Arg186 together coordinate tungstopterin. [4Fe-4S] cluster-binding residues include Cys288, Cys291, and Cys295. Residues Asp338, Leu342, Asp343, Arg444, Lys450, Asp489, and Leu493 each coordinate tungstopterin. Cys494 is a binding site for [4Fe-4S] cluster. Residue Leu495 participates in tungstopterin binding.

This sequence belongs to the AOR/FOR family. Monomer. Homodimer. Requires [4Fe-4S] cluster as cofactor. Tungstopterin is required as a cofactor.

It carries out the reaction an aldehyde + 2 oxidized [2Fe-2S]-[ferredoxin] + H2O = a carboxylate + 2 reduced [2Fe-2S]-[ferredoxin] + 3 H(+). With respect to regulation, inhibited by arsenite, iodoacetate and cyanide. In terms of biological role, aldehyde ferredoxin oxidoreductase with a broad substrate specificity. Catalyzes the oxidation of a range of aliphatic aldehydes to their corresponding carboxylic acids. In vitro can use crotonaldehyde, acetaldehyde, formaldehyde, butyraldehyde or glyceraldehyde as substrate, using methyl viologen or ferredoxin, but not NAD(P), as the electron acceptor. Does not oxidize glucose or glyceraldehyde 3-phosphate. May be involved in a pyroglycolytic pathway. In Pyrococcus furiosus (strain ATCC 43587 / DSM 3638 / JCM 8422 / Vc1), this protein is Tungsten-containing aldehyde ferredoxin oxidoreductase.